Here is a 148-residue protein sequence, read N- to C-terminus: D-aminoacyl-tRNA deacylase (148 aa).

Residues 136–137 carry the Gly-cisPro motif, important for rejection of L-amino acids motif; it reads GP.

It belongs to the DTD family. Homodimer.

The protein localises to the cytoplasm. It catalyses the reaction glycyl-tRNA(Ala) + H2O = tRNA(Ala) + glycine + H(+). The catalysed reaction is a D-aminoacyl-tRNA + H2O = a tRNA + a D-alpha-amino acid + H(+). Functionally, an aminoacyl-tRNA editing enzyme that deacylates mischarged D-aminoacyl-tRNAs. Also deacylates mischarged glycyl-tRNA(Ala), protecting cells against glycine mischarging by AlaRS. Acts via tRNA-based rather than protein-based catalysis; rejects L-amino acids rather than detecting D-amino acids in the active site. By recycling D-aminoacyl-tRNA to D-amino acids and free tRNA molecules, this enzyme counteracts the toxicity associated with the formation of D-aminoacyl-tRNA entities in vivo and helps enforce protein L-homochirality. The sequence is that of D-aminoacyl-tRNA deacylase from Kosmotoga olearia (strain ATCC BAA-1733 / DSM 21960 / TBF 19.5.1).